Consider the following 201-residue polypeptide: FMN-dependent NADH:quinone oxidoreductase (201 aa).

FMN-binding positions include Ser-10, 16–18 (SQS), 96–99 (MYNF), and 140–143 (SRGG).

It belongs to the azoreductase type 1 family. In terms of assembly, homodimer. It depends on FMN as a cofactor.

The catalysed reaction is 2 a quinone + NADH + H(+) = 2 a 1,4-benzosemiquinone + NAD(+). The enzyme catalyses N,N-dimethyl-1,4-phenylenediamine + anthranilate + 2 NAD(+) = 2-(4-dimethylaminophenyl)diazenylbenzoate + 2 NADH + 2 H(+). Its function is as follows. Quinone reductase that provides resistance to thiol-specific stress caused by electrophilic quinones. In terms of biological role, also exhibits azoreductase activity. Catalyzes the reductive cleavage of the azo bond in aromatic azo compounds to the corresponding amines. This Escherichia coli O6:K15:H31 (strain 536 / UPEC) protein is FMN-dependent NADH:quinone oxidoreductase.